A 369-amino-acid polypeptide reads, in one-letter code: Flagellar P-ring protein (369 aa).

Positions 1-22 (MIKLKQLIAATLLLSAAFGAHA) are cleaved as a signal peptide.

It belongs to the FlgI family. In terms of assembly, the basal body constitutes a major portion of the flagellar organelle and consists of four rings (L,P,S, and M) mounted on a central rod.

The protein localises to the periplasm. It is found in the bacterial flagellum basal body. In terms of biological role, assembles around the rod to form the L-ring and probably protects the motor/basal body from shearing forces during rotation. The protein is Flagellar P-ring protein of Pseudomonas syringae pv. tomato (strain ATCC BAA-871 / DC3000).